We begin with the raw amino-acid sequence, 166 residues long: Phosphopantetheine adenylyltransferase (166 aa).

Threonine 9 is a substrate binding site. ATP-binding positions include 9–10 (TF) and histidine 17. Substrate-binding residues include lysine 41, leucine 73, and arginine 87. ATP-binding positions include 88-90 (GLR), glutamate 98, and 123-129 (YQFISGT).

This sequence belongs to the bacterial CoaD family. As to quaternary structure, homohexamer. Mg(2+) serves as cofactor.

Its subcellular location is the cytoplasm. It carries out the reaction (R)-4'-phosphopantetheine + ATP + H(+) = 3'-dephospho-CoA + diphosphate. It participates in cofactor biosynthesis; coenzyme A biosynthesis; CoA from (R)-pantothenate: step 4/5. Reversibly transfers an adenylyl group from ATP to 4'-phosphopantetheine, yielding dephospho-CoA (dPCoA) and pyrophosphate. This chain is Phosphopantetheine adenylyltransferase, found in Burkholderia mallei (strain NCTC 10229).